The chain runs to 334 residues: Transcription initiation factor IIB (334 aa).

Residues 34-65 (TESVCPECKSRQLVHDYERAELVCQNCGLVID) form a TFIIB-type zinc finger. Zn(2+) is bound by residues Cys38, Cys41, Cys57, and Cys60. 2 consecutive repeat copies span residues 151-234 (SELD…SREL) and 245-326 (DYVP…ELAE).

It belongs to the TFIIB family.

Functionally, stabilizes TBP binding to an archaeal box-A promoter. Also responsible for recruiting RNA polymerase II to the pre-initiation complex (DNA-TBP-TFIIB). This Methanosphaerula palustris (strain ATCC BAA-1556 / DSM 19958 / E1-9c) protein is Transcription initiation factor IIB.